A 307-amino-acid polypeptide reads, in one-letter code: Serine/threonine-protein phosphatase 4 catalytic subunit (307 aa).

N-acetylalanine is present on Ala-2. Positions 54, 56, 82, and 114 each coordinate Mn(2+). Residue His-115 is the Proton donor of the active site. Mn(2+) is bound by residues His-164 and His-238. At Leu-307 the chain carries Leucine methyl ester.

Belongs to the PPP phosphatase family. PP-4 (PP-X) subfamily. Serine/threonine-protein phosphatase 4 (PP4) occurs in different assemblies of the catalytic and one or more regulatory subunits. Component of the PP4 complexes PPP4C-PPP4R1, PPP4C-PPP4R2, PPP4C-PPP4R2-PPP4R3A, PPP4C-PPP4R2-PPP4R3B and PPP4C-PPP4R4. The PPP4C-PPP4R2 complex appears to be a tetramer composed of 2 molecules of PPP4C and 2 molecules of PPP4R2. Interacts with REL, NFKB1/p50 and RELA. Interacts with SMN1 and GEMIN4. Interacts with IRS4 (phosphorylated). Interacts with SMEK1/PPP4R3A; the interaction requires PP4R2. Interacts with HDAC3. It depends on Mn(2+) as a cofactor. Post-translationally, methylation at the C-terminal Leu-307 is critical for interactions with regulatory subunits and functions in DNA repair.

The protein resides in the cytoplasm. Its subcellular location is the nucleus. It localises to the cytoskeleton. It is found in the microtubule organizing center. The protein localises to the centrosome. It carries out the reaction O-phospho-L-seryl-[protein] + H2O = L-seryl-[protein] + phosphate. It catalyses the reaction O-phospho-L-threonyl-[protein] + H2O = L-threonyl-[protein] + phosphate. Protein phosphatase that is involved in many processes such as microtubule organization at centrosomes, maturation of spliceosomal snRNPs, apoptosis, DNA repair, tumor necrosis factor (TNF)-alpha signaling, activation of c-Jun N-terminal kinase MAPK8, regulation of histone acetylation, DNA damage checkpoint signaling, NF-kappa-B activation and cell migration. The PPP4C-PPP4R1 PP4 complex may play a role in dephosphorylation and regulation of HDAC3. The PPP4C-PPP4R2-PPP4R3A PP4 complex specifically dephosphorylates H2AX phosphorylated on Ser-140 (gamma-H2AX) generated during DNA replication and required for DNA double strand break repair. Dephosphorylates NDEL1 at CDK1 phosphorylation sites and negatively regulates CDK1 activity in interphase. In response to DNA damage, catalyzes RPA2 dephosphorylation, an essential step for DNA repair since it allows the efficient RPA2-mediated recruitment of RAD51 to chromatin. The polypeptide is Serine/threonine-protein phosphatase 4 catalytic subunit (PPP4C) (Homo sapiens (Human)).